The primary structure comprises 257 residues: MKYDTILVDGYQRVGIITLNRPQALNALNSQMMNEITNAAKELDIDPDVGAILITGSPKVFAAGADIKEMASLTFTDAFDADFFSAWGKLAAVRTPMIAAVAGYALGGGCELAMMCDLLIAADTAKFGQPEIKLGVLPGMGGSQRLTRAIGKAKAMDLILTGRTIDAAEAERSGLVSRVVLADDLLPEAKAVATTISQMSRSATRMAKEAVNRSFESTLAEGLLHERRLFHSTFVTDDQSEGMAAFIEKRAPQFTHR.

Belongs to the enoyl-CoA hydratase/isomerase family.

The catalysed reaction is a (3S)-3-hydroxyacyl-CoA = a (2E)-enoyl-CoA + H2O. It catalyses the reaction a 4-saturated-(3S)-3-hydroxyacyl-CoA = a (3E)-enoyl-CoA + H2O. Functionally, could possibly oxidize fatty acids using specific components. The chain is Probable enoyl-CoA hydratase echA8 (echA8) from Mycobacterium leprae (strain TN).